The sequence spans 276 residues: Small ribosomal subunit protein uS2 (276 aa).

The disordered stretch occupies residues 255–276 (ASATATAAPTEAGAPEPTTDPS).

It belongs to the universal ribosomal protein uS2 family.

The chain is Small ribosomal subunit protein uS2 from Mycolicibacterium paratuberculosis (strain ATCC BAA-968 / K-10) (Mycobacterium paratuberculosis).